An 843-amino-acid chain; its full sequence is Toll-like receptor 4 (843 aa).

Positions 1-23 are cleaved as a signal peptide; that stretch reads MMPPTRLAGTLIPAMAFLSCLRP. Positions 24–54 constitute an LRRNT domain; sequence ESWDPCVQVVPNTTYQCMDLNLYKIPENIPT. The Extracellular portion of the chain corresponds to 24–633; sequence ESWDPCVQVV…FNNATCQISK (610 aa). Cys29 and Cys40 are joined by a disulfide. N-linked (GlcNAc...) asparagine glycosylation is present at Asn35. LRR repeat units lie at residues 55–76, 79–100, 103–124, 127–148, 151–172, 176–197, 205–225, and 227–247; these read STKELDLSFNPLKELGSHSFSN, ELQVLDLSRCEIEMIEDDAYQG, HLSTLILTGNPIRSLALGAFSG, SLQTLVAVETKLSSLEKFPIGH, TLKELNVAHNLIHSFKLPEYFS, NLEHLDLSNNKIQNISHEDLRV, NLSLDLSLNPLEFIQPDAFKE, and KLHKLTLRSNFDSIDVMKSCI. N-linked (GlcNAc...) asparagine glycans are attached at residues Asn189 and Asn205. 2 N-linked (GlcNAc...) asparagine glycosylation sites follow: Asn282 and Asn295. LRR repeat units follow at residues 353 to 374, 375 to 398, 401 to 423, 424 to 445, 449 to 459, 473 to 496, 498 to 519, 522 to 543, and 546 to 569; these read SLKRLVFTSNKDMKSFNEVKLP, SLEFLDLSRNRLSFKSCCSEADLK, RLKHLDLSFNDVISMSSNFMGLE, QLEHLDFQHSTLKQASDFPVFL, NLRYLDISYTN, SLQVLKMAGNSFKDNFLPNIFREM, NLTTLDLSKCNLEQVSQEAFCL, RLRVLNMSHNNLLFLDMLPYKP, and SLQILDCSFNRIVAFKWQELQHFP. A disulfide bridge links Cys391 with Cys392. Residues Asn498 and Asn527 are each glycosylated (N-linked (GlcNAc...) asparagine). Asn576 carries N-linked (GlcNAc...) asparagine glycosylation. Positions 580 to 631 constitute an LRRCT domain; the sequence is NDFACVCEYQSFLQWVKDQRQLLVEVEHLVCAIPLQMRGMPVLGFNNATCQI. 2 disulfide bridges follow: Cys584-Cys610 and Cys586-Cys629. Asn626 carries an N-linked (GlcNAc...) asparagine glycan. Residues 634-654 traverse the membrane as a helical segment; it reads TIVGGSVFSILMVSVIAVLVY. At 655–843 the chain is on the cytoplasmic side; the sequence is KFYFHLMLLA…SRQHDAETST (189 aa). Residues 674-817 enclose the TIR domain; sequence SIYDAFVIYS…IFWRRLRKAL (144 aa). Residues 824 to 843 form a disordered region; it reads SPAGTADAAESRQHDAETST. Residues 832 to 843 show a composition bias toward basic and acidic residues; the sequence is AESRQHDAETST.

It belongs to the Toll-like receptor family. As to quaternary structure, belongs to the lipopolysaccharide (LPS) receptor, a multi-protein complex containing at least CD14, LY96 and TLR4. Binding to bacterial LPS leads to homodimerization. Interacts with LY96 via the extracellular domain. Interacts with MYD88 and TIRAP via their respective TIR domains. Interacts with NOX4. Interacts with CNPY3 and HSP90B1; this interaction is required for proper folding in the endoplasmic reticulum. Interacts with MAP3K21; this interaction leads to negative regulation of TLR4 signaling. Interacts with CD36, following CD36 stimulation by oxLDL or amyloid-beta 42, and forms a heterodimer with TLR6. The trimeric complex is internalized and triggers inflammatory response. LYN kinase activity facilitates TLR4-TLR6 heterodimerization and signal initiation. Interacts with TICAM1 in response to LPS in a WDFY1-dependent manner. Interacts with WDFY1 in response to LPS. Interacts with SMPDL3B. Interacts with CEACAM1; upon lipopolysaccharide stimulation, forms a complex including TLR4 and the phosphorylated form of SYK and CEACAM1, which in turn, recruits PTPN6 that dephosphorylates SYK, reducing the production of reactive oxygen species (ROS) and lysosome disruption, which in turn, reduces the activity of the inflammasome. Interacts with RFTN1; the interaction occurs in response to lipopolysaccharide stimulation. Interacts with SCIMP; the interaction occurs in response to lipopolysaccharide stimulation and is enhanced by phosphorylation of SCIMP by LYN. This interaction facilitates the phosphorylation of TLR4 by LYN which elicits a selective cytokine response in macrophages. Interacts with TRAF3IP3. Interacts with TREM1; this interaction enhances TLR4-mediated inflammatory response. Interacts with ZG16B/PAUF. Interacts with CD82; this interaction inhibits TLR4-mediated signaling pathway. Post-translationally, phosphorylated on tyrosine residues by LYN after binding lipopolysaccharide. In terms of processing, ubiquitinated by RNF128 via 'Lys-28'-linked polyubiquitin chains, leading to proteasomal degradation.

It localises to the cell membrane. The protein localises to the early endosome. It is found in the cell projection. The protein resides in the ruffle. In terms of biological role, transmembrane receptor that functions as a pattern recognition receptor recognizing pathogen- and damage-associated molecular patterns (PAMPs and DAMPs) to induce innate immune responses via downstream signaling pathways. At the plasma membrane, cooperates with LY96 to mediate the innate immune response to bacterial lipopolysaccharide (LPS). Also involved in LPS-independent inflammatory responses triggered by free fatty acids, such as palmitate, and Ni(2+). Mechanistically, acts via MYD88, TIRAP and TRAF6, leading to NF-kappa-B activation, cytokine secretion and the inflammatory response. Alternatively, CD14-mediated TLR4 internalization via endocytosis is associated with the initiation of a MYD88-independent signaling via the TICAM1-TBK1-IRF3 axis leading to type I interferon production. In addition to the secretion of proinflammatory cytokines, initiates the activation of NLRP3 inflammasome and formation of a positive feedback loop between autophagy and NF-kappa-B signaling cascade. In complex with TLR6, promotes inflammation in monocytes/macrophages by associating with TLR6 and the receptor CD86. Upon ligand binding, such as oxLDL or amyloid-beta 42, the TLR4:TLR6 complex is internalized and triggers inflammatory response, leading to NF-kappa-B-dependent production of CXCL1, CXCL2 and CCL9 cytokines, via MYD88 signaling pathway, and CCL5 cytokine, via TICAM1 signaling pathway. In myeloid dendritic cells, vesicular stomatitis virus glycoprotein G but not LPS promotes the activation of IRF7, leading to type I IFN production in a CD14-dependent manner. This Equus caballus (Horse) protein is Toll-like receptor 4 (TLR4).